Here is a 134-residue protein sequence, read N- to C-terminus: Putative integral membrane protein YxzK (134 aa).

Helical transmembrane passes span 3-23 (VIRIILQVLILYVFFMIGEAI), 35-55 (IVGLVLLLICLGLRIVPVSII), 58-78 (GAGFLLSFLPLLFIPAMTGVI), and 89-109 (LMLLITVVLSTIVTIIAAGFA).

It is found in the cell membrane. The protein is Putative integral membrane protein YxzK (yxzK) of Bacillus subtilis (strain 168).